A 179-amino-acid polypeptide reads, in one-letter code: Large ribosomal subunit protein uL5 (179 aa).

The protein belongs to the universal ribosomal protein uL5 family. In terms of assembly, part of the 50S ribosomal subunit; part of the 5S rRNA/L5/L18/L25 subcomplex. Contacts the 5S rRNA and the P site tRNA. Forms a bridge to the 30S subunit in the 70S ribosome.

This is one of the proteins that bind and probably mediate the attachment of the 5S RNA into the large ribosomal subunit, where it forms part of the central protuberance. In the 70S ribosome it contacts protein S13 of the 30S subunit (bridge B1b), connecting the 2 subunits; this bridge is implicated in subunit movement. Contacts the P site tRNA; the 5S rRNA and some of its associated proteins might help stabilize positioning of ribosome-bound tRNAs. The polypeptide is Large ribosomal subunit protein uL5 (Ectopseudomonas mendocina (strain ymp) (Pseudomonas mendocina)).